A 190-amino-acid chain; its full sequence is Elongation factor P 2 (190 aa).

This sequence belongs to the elongation factor P family.

It localises to the cytoplasm. It participates in protein biosynthesis; polypeptide chain elongation. Involved in peptide bond synthesis. Stimulates efficient translation and peptide-bond synthesis on native or reconstituted 70S ribosomes in vitro. Probably functions indirectly by altering the affinity of the ribosome for aminoacyl-tRNA, thus increasing their reactivity as acceptors for peptidyl transferase. In Chlamydia trachomatis serovar D (strain ATCC VR-885 / DSM 19411 / UW-3/Cx), this protein is Elongation factor P 2 (efp2).